The primary structure comprises 297 residues: tRNA dimethylallyltransferase (297 aa).

10–17 contributes to the ATP binding site; that stretch reads GITASGKS. 12–17 is a binding site for substrate; sequence TASGKS. Residues 36–39 form an interaction with substrate tRNA region; that stretch reads DSKQ.

Belongs to the IPP transferase family. In terms of assembly, monomer. The cofactor is Mg(2+).

The enzyme catalyses adenosine(37) in tRNA + dimethylallyl diphosphate = N(6)-dimethylallyladenosine(37) in tRNA + diphosphate. Its function is as follows. Catalyzes the transfer of a dimethylallyl group onto the adenine at position 37 in tRNAs that read codons beginning with uridine, leading to the formation of N6-(dimethylallyl)adenosine (i(6)A). The sequence is that of tRNA dimethylallyltransferase from Wolbachia pipientis wMel.